The primary structure comprises 440 residues: uncharacterized protein (440 aa).

This is an uncharacterized protein from Saccharolobus islandicus (Sulfolobus islandicus).